The sequence spans 955 residues: Reversion-inducing cysteine-rich protein with Kazal motifs (955 aa).

The signal sequence occupies residues 1–22 (MSGCLQILTVLLCCRFWALVFS). The Knot 1 repeat unit spans residues 28-75 (CVHHAADIPRCRDACEQLASIRSESRLRHLLHRLPSYCPETLSELWIC). Residues 28–326 (CVHHAADIPR…NPVEMDLITC (299 aa)) form a 5 X Knot repeats region. Asn77 is a glycosylation site (N-linked (GlcNAc...) asparagine). Knot repeat units follow at residues 95-132 (CCELAISAECRRDCKQASSKNDISKVCKKDTENPLYSC) and 142-188 (CCSY…LILC). Asn191 is a glycosylation site (N-linked (GlcNAc...) asparagine). Knot repeat units lie at residues 207–254 (CCDR…LWQC) and 282–326 (CCFK…LITC). Residues Asn287 and Asn375 are each glycosylated (N-linked (GlcNAc...) asparagine). 3 Kazal-like domains span residues 615–661 (LFTG…SCRS), 686–741 (DLSE…HCQD), and 742–778 (ACRRPREVCAHNGESYSTVCEAFSERVAVDYQGRCHA). Cystine bridges form between Cys621–Cys646, Cys623–Cys642, Cys631–Cys659, Cys704–Cys724, and Cys713–Cys739. The GPI-anchor amidated serine moiety is linked to residue Ser931. The propeptide occupies 932 to 955 (SCVSISVCVLLLLCSLILTLTSDL).

Belongs to the RECK family. Interacts (via knot repeats) with wnt7a (via disordered linker region); the interaction is direct. Interacts (via knot repeats) with wnt7b (via disordered linker region); the interaction is direct. Interacts with adgra2; the interaction is direct. As to expression, expressed in the cerebral endothelium.

The protein resides in the cell membrane. Functions together with adgra2 to enable brain endothelial cells to selectively respond to Wnt7 signals (wnt7a or wnt7b). Plays a key role in Wnt7-specific responses: required for central nervous system (CNS) angiogenesis and blood-brain barrier regulation. Acts as a Wnt7-specific coactivator of canonical Wnt signaling by decoding Wnt ligands: acts by interacting specifically with the disordered linker region of Wnt7, thereby conferring ligand selectivity for Wnt7. Adgra2 is then required to deliver reck-bound Wnt7 to frizzled by assembling a higher-order RECK-ADGRA2-Fzd-LRP5-LRP6 complex. Also acts as a serine protease inhibitor. The protein is Reversion-inducing cysteine-rich protein with Kazal motifs of Danio rerio (Zebrafish).